Reading from the N-terminus, the 91-residue chain is Small ribosomal subunit protein uS19 (91 aa).

This sequence belongs to the universal ribosomal protein uS19 family.

In terms of biological role, protein S19 forms a complex with S13 that binds strongly to the 16S ribosomal RNA. The sequence is that of Small ribosomal subunit protein uS19 from Synechococcus sp. (strain CC9311).